A 377-amino-acid polypeptide reads, in one-letter code: uncharacterized protein (377 aa).

This is an uncharacterized protein from Magallana gigas (Pacific oyster).